The following is a 390-amino-acid chain: NADH-quinone oxidoreductase subunit D (390 aa).

Belongs to the complex I 49 kDa subunit family. As to quaternary structure, NDH-1 is composed of 14 different subunits. Subunits NuoB, C, D, E, F, and G constitute the peripheral sector of the complex.

The protein resides in the cell inner membrane. The catalysed reaction is a quinone + NADH + 5 H(+)(in) = a quinol + NAD(+) + 4 H(+)(out). Its function is as follows. NDH-1 shuttles electrons from NADH, via FMN and iron-sulfur (Fe-S) centers, to quinones in the respiratory chain. The immediate electron acceptor for the enzyme in this species is believed to be ubiquinone. Couples the redox reaction to proton translocation (for every two electrons transferred, four hydrogen ions are translocated across the cytoplasmic membrane), and thus conserves the redox energy in a proton gradient. In Geobacter metallireducens (strain ATCC 53774 / DSM 7210 / GS-15), this protein is NADH-quinone oxidoreductase subunit D.